The chain runs to 318 residues: Transaldolase (318 aa).

K132 functions as the Schiff-base intermediate with substrate in the catalytic mechanism.

Belongs to the transaldolase family. Type 1 subfamily. Homodimer.

It is found in the cytoplasm. It catalyses the reaction D-sedoheptulose 7-phosphate + D-glyceraldehyde 3-phosphate = D-erythrose 4-phosphate + beta-D-fructose 6-phosphate. It functions in the pathway carbohydrate degradation; pentose phosphate pathway; D-glyceraldehyde 3-phosphate and beta-D-fructose 6-phosphate from D-ribose 5-phosphate and D-xylulose 5-phosphate (non-oxidative stage): step 2/3. Its function is as follows. Transaldolase is important for the balance of metabolites in the pentose-phosphate pathway. In Shewanella sp. (strain MR-7), this protein is Transaldolase.